A 287-amino-acid polypeptide reads, in one-letter code: Bifunctional protein FolD (287 aa).

NADP(+) is bound by residues 165–167 (GRS), S190, and I231.

It belongs to the tetrahydrofolate dehydrogenase/cyclohydrolase family. Homodimer.

It catalyses the reaction (6R)-5,10-methylene-5,6,7,8-tetrahydrofolate + NADP(+) = (6R)-5,10-methenyltetrahydrofolate + NADPH. The enzyme catalyses (6R)-5,10-methenyltetrahydrofolate + H2O = (6R)-10-formyltetrahydrofolate + H(+). It participates in one-carbon metabolism; tetrahydrofolate interconversion. Catalyzes the oxidation of 5,10-methylenetetrahydrofolate to 5,10-methenyltetrahydrofolate and then the hydrolysis of 5,10-methenyltetrahydrofolate to 10-formyltetrahydrofolate. This chain is Bifunctional protein FolD, found in Trichodesmium erythraeum (strain IMS101).